Consider the following 848-residue polypeptide: DIS3-like exonuclease 2 (848 aa).

The tract at residues 153–173 is disordered; that stretch reads KGDRNSGKTDNNSPNKTEKRC. The Mg(2+) site is built by D345 and D354.

This sequence belongs to the RNR ribonuclease family. DIS3L2 subfamily. It depends on Mg(2+) as a cofactor. Mn(2+) serves as cofactor. Cleaved by caspase ced-3 in vitro.

Its subcellular location is the cytoplasm. The protein localises to the P-body. 3'-5'-exoribonuclease that specifically recognizes RNAs polyuridylated at their 3' end and mediates their degradation. Component of an exosome-independent RNA degradation pathway that mediates degradation of cytoplasmic mRNAs that have been deadenylated and subsequently uridylated at their 3'. The polypeptide is DIS3-like exonuclease 2 (Caenorhabditis elegans).